A 421-amino-acid chain; its full sequence is Histidine--tRNA ligase (421 aa).

This sequence belongs to the class-II aminoacyl-tRNA synthetase family. In terms of assembly, homodimer.

It is found in the cytoplasm. The enzyme catalyses tRNA(His) + L-histidine + ATP = L-histidyl-tRNA(His) + AMP + diphosphate + H(+). In Nitrosomonas eutropha (strain DSM 101675 / C91 / Nm57), this protein is Histidine--tRNA ligase.